We begin with the raw amino-acid sequence, 86 residues long: Toxin Td8 (86 aa).

The first 20 residues, 1–20, serve as a signal peptide directing secretion; it reads MTRFVLFLSCFFLIGMVVEC. Positions 21–83 constitute an LCN-type CS-alpha/beta domain; that stretch reads KDGYLVGDDG…IWNSATNRCR (63 aa). 4 cysteine pairs are disulfide-bonded: C31/C82, C35/C57, C43/C63, and C47/C65. Position 83 is an arginine amide (R83).

In terms of tissue distribution, expressed by the venom gland.

Its subcellular location is the secreted. In terms of biological role, beta toxins bind voltage-independently at site-4 of sodium channels (Nav) and shift the voltage of activation toward more negative potentials thereby affecting sodium channel activation and promoting spontaneous and repetitive firing. This chain is Toxin Td8, found in Tityus discrepans (Venezuelan scorpion).